A 117-amino-acid chain; its full sequence is Probable non-functional immunoglobulin kappa variable 1D-42 (117 aa).

The first 22 residues, 1–22 (MDMRVPAQLLGLLLLWLPGVRF), serve as a signal peptide directing secretion. The interval 23 to 45 (DIQMTQSPSFLSASVGDRVSIIC) is framework-1. The Ig-like domain occupies 23-117 (DIQMTQSPSF…YYCKQDFSYP (95 aa)). An intrachain disulfide couples Cys45 to Cys110. The interval 46-56 (WASEGISSNLA) is complementarity-determining-1. Positions 57–71 (WYLQKPGKSPKLFLY) are framework-2. A complementarity-determining-2 region spans residues 72–78 (DAKDLHP). The segment at 79 to 110 (GVSSRFSGRGSGTDFTLTIISLKPEDFAAYYC) is framework-3. The complementarity-determining-3 stretch occupies residues 111 to 117 (KQDFSYP).

Immunoglobulins are composed of two identical heavy chains and two identical light chains; disulfide-linked.

The protein localises to the secreted. It is found in the cell membrane. In terms of biological role, probable non-functional open reading frame (ORF) of V region of the variable domain of immunoglobulin light chains. Non-functional ORF generally cannot participate in the synthesis of a productive immunoglobulin chain due to altered V-(D)-J or switch recombination and/or splicing site (at mRNA level) and/or conserved amino acid change (protein level). Immunoglobulins, also known as antibodies, are membrane-bound or secreted glycoproteins produced by B lymphocytes. In the recognition phase of humoral immunity, the membrane-bound immunoglobulins serve as receptors which, upon binding of a specific antigen, trigger the clonal expansion and differentiation of B lymphocytes into immunoglobulins-secreting plasma cells. Secreted immunoglobulins mediate the effector phase of humoral immunity, which results in the elimination of bound antigens. The antigen binding site is formed by the variable domain of one heavy chain, together with that of its associated light chain. Thus, each immunoglobulin has two antigen binding sites with remarkable affinity for a particular antigen. The variable domains are assembled by a process called V-(D)-J rearrangement and can then be subjected to somatic hypermutations which, after exposure to antigen and selection, allow affinity maturation for a particular antigen. In Homo sapiens (Human), this protein is Probable non-functional immunoglobulin kappa variable 1D-42.